The sequence spans 174 residues: Translation initiation factor IF-3 (174 aa).

This sequence belongs to the IF-3 family. As to quaternary structure, monomer.

It is found in the cytoplasm. In terms of biological role, IF-3 binds to the 30S ribosomal subunit and shifts the equilibrium between 70S ribosomes and their 50S and 30S subunits in favor of the free subunits, thus enhancing the availability of 30S subunits on which protein synthesis initiation begins. This Azorhizobium caulinodans (strain ATCC 43989 / DSM 5975 / JCM 20966 / LMG 6465 / NBRC 14845 / NCIMB 13405 / ORS 571) protein is Translation initiation factor IF-3.